Reading from the N-terminus, the 152-residue chain is Small ribosomal subunit protein uS13 (152 aa).

Belongs to the universal ribosomal protein uS13 family. Component of the small ribosomal subunit.

It is found in the cytoplasm. Component of the small ribosomal subunit. The ribosome is a large ribonucleoprotein complex responsible for the synthesis of proteins in the cell. The chain is Small ribosomal subunit protein uS13 (rps18) from Ictalurus punctatus (Channel catfish).